Here is a 118-residue protein sequence, read N- to C-terminus: Immunoglobulin heavy variable 4-30-2 (118 aa).

The signal sequence occupies residues 1-19; it reads MKHLWFFLLLVAAPRWVLS. The interval 20–44 is framework-1; the sequence is QLQLQESGSGLVKPSQTLSLTCAVS. One can recognise an Ig-like domain in the interval 20-118; sequence QLQLQESGSG…ADTAVYYCAR (99 aa). C41 and C116 are oxidised to a cystine. The complementarity-determining-1 stretch occupies residues 45–54; sequence GGSISSGGYS. The framework-2 stretch occupies residues 55–71; the sequence is WSWIRQPPGKGLEWIGY. The complementarity-determining-2 stretch occupies residues 72–78; it reads IYHSGST. The interval 79–116 is framework-3; the sequence is YYNPSLKSRVTISVDRSKNQFSLKLSSVTAADTAVYYC. Positions 117–118 are complementarity-determining-3; it reads AR.

As to quaternary structure, immunoglobulins are composed of two identical heavy chains and two identical light chains; disulfide-linked.

Its subcellular location is the secreted. It localises to the cell membrane. V region of the variable domain of immunoglobulin heavy chains that participates in the antigen recognition. Immunoglobulins, also known as antibodies, are membrane-bound or secreted glycoproteins produced by B lymphocytes. In the recognition phase of humoral immunity, the membrane-bound immunoglobulins serve as receptors which, upon binding of a specific antigen, trigger the clonal expansion and differentiation of B lymphocytes into immunoglobulins-secreting plasma cells. Secreted immunoglobulins mediate the effector phase of humoral immunity, which results in the elimination of bound antigens. The antigen binding site is formed by the variable domain of one heavy chain, together with that of its associated light chain. Thus, each immunoglobulin has two antigen binding sites with remarkable affinity for a particular antigen. The variable domains are assembled by a process called V-(D)-J rearrangement and can then be subjected to somatic hypermutations which, after exposure to antigen and selection, allow affinity maturation for a particular antigen. The polypeptide is Immunoglobulin heavy variable 4-30-2 (Homo sapiens (Human)).